The chain runs to 1069 residues: Adenylate-forming reductase (1069 aa).

An adenylation (A) domain region spans residues 20 to 391; it reads HPEDPKAVKS…WKLRQDINYR (372 aa). Residues histidine 262, 357–358, threonine 362, and 437–440 each bind AMP; these read AH and AVGR. The Carrier domain maps to 576–656; sequence DSLEEDLKDL…KLGASLRHLA (81 aa). Position 612 is an O-(pantetheine 4'-phosphoryl)serine (serine 612). The tract at residues 686–1032 is reductase (R) domain; that stretch reads TVLLTGSTGN…TGKVILDTSR (347 aa). NADP(+) is bound by residues 693–696, arginine 719, 785–787, tyrosine 863, and lysine 867; these read TGNL and NAW.

It belongs to the adenylate-forming reductase family.

The enzyme catalyses 5-methylorsellinate + ATP + NADPH + H(+) = 2,4-dihydroxy 5,6-dimethylbenzaldehyde + AMP + diphosphate + NADP(+). It functions in the pathway secondary metabolite biosynthesis. Functionally, non-canonical non-ribosomal peptide synthetase; part of the cluster A that mediates the biosynthesis of azasperpyranones, members of the azaphilone family that exhibit anti-cancer activities. Azasperpyranones are synthesized by 2 clusters, A and B. Cluster A is responsible for the production of the polyhydric phenol moiety while the azaphilonoid scaffold is produced by the cluster B. The non-reducing polyketide synthase ATEG_03629 produces 5-methyl orsellinic acid, which is then reduced to 5-methyl orsellinic aldehyde by the NRPS-like protein ATEG_03630. 5-methyl orsellinic aldehyde is then first hydroxylated by the FAD-dependent monooxygenase ATEG_03635 and subsequently hydroxylated by the cytochrome P450 monooxygenase ATEG_03631 to produce the unstable polyhydric phenol precursor of azasperpyranones. On the other hand, the polyketide synthase ATEG_07659 is responsible for producing the 3,5-dimethyloctadienone moiety from acetyl-CoA, three malonyl-CoA, and two S-adenosyl methionines (SAM). The 3,5-dimethyloctadienone moiety is then loaded onto the SAT domain of ATEG_07661 and extended with four malonyl-CoA and one SAM, which leads to the formation of 2,4-dihydroxy-6-(5,7-dimethyl-2-oxo-trans-3-trans-5-nonadienyl)-3-methylbenzaldehyde (compound 8) after reductive release and aldol condensation. The FAD-dependent monooxygenase ATEG_07662 is the next enzyme in the biosynthesis sequence and hydroxylates the side chain at the benzylic position of compound 8. In Aspergillus nidulans, afoF, the ortholog of the FAD-dependent oxygenase ATEG_07660, is the key enzyme for the biosynthesis of asperfuranone by catalyzing the hydroxylation at C-8 of to prevent the formation of a six-membered ring hemiacetal intermediate and thus facilitating the formation of a five-membered ring to produce asperfuranone. In Aspergillus terreus, ATEG_07660 is probably not functional, which leads to the formation of the six-membered ring hemiacetal intermediate presperpyranone instead of asperfuranone. Finally, ATEG_03636 is involved in the condensation of the polyhydric phenol moiety produced by cluster A and the perasperpyranone precursor produced by cluster B, to yield azasperpyranone A. Further modifications of azasperpyranone A result in the production of derivatives, including azasperpyranone B to F. The sequence is that of Adenylate-forming reductase from Aspergillus terreus (strain NIH 2624 / FGSC A1156).